A 273-amino-acid polypeptide reads, in one-letter code: Endochitinase EP3 (273 aa).

Residues 1 to 28 (MLTPTISKSISLVTILLVLQAFSNTTKA) form the signal peptide. An N-linked (GlcNAc...) asparagine glycan is attached at N24. One can recognise a Chitin-binding type-1 domain in the interval 29 to 63 (QNCGCSSELCCSQFGFCGNTSDYCGVGCQQGPCFA). 4 cysteine pairs are disulfide-bonded: C31–C39, C33–C45, C38–C52, and C56–C61. N47 carries N-linked (GlcNAc...) asparagine glycosylation. Positions 70-273 (VSVAEIVTQE…GVDPGNNLTC (204 aa)) are catalytic. The active-site Proton donor is the E136. N157 and N270 each carry an N-linked (GlcNAc...) asparagine glycan.

This sequence belongs to the glycosyl hydrolase 19 family. Chitinase class I subfamily. Expressed in cells surrounding embryos, stems, seedlings, pollen, roots, shoots, inflorescence, flowers, siliques and leaves. Present in seedpods and seed embryos, but not in roots, inflorescence stems, leaves and flowers.

The enzyme catalyses Random endo-hydrolysis of N-acetyl-beta-D-glucosaminide (1-&gt;4)-beta-linkages in chitin and chitodextrins.. Probably involved in hypersensitive reaction upon Xanthomonas campestris infection. The chain is Endochitinase EP3 from Arabidopsis thaliana (Mouse-ear cress).